We begin with the raw amino-acid sequence, 289 residues long: tRNA-cytidine(32) 2-sulfurtransferase (289 aa).

The PP-loop motif signature appears at 39–44 (SGGKDS). Cys114, Cys117, and Cys205 together coordinate [4Fe-4S] cluster.

Belongs to the TtcA family. Homodimer. The cofactor is Mg(2+). [4Fe-4S] cluster is required as a cofactor.

The protein resides in the cytoplasm. It catalyses the reaction cytidine(32) in tRNA + S-sulfanyl-L-cysteinyl-[cysteine desulfurase] + AH2 + ATP = 2-thiocytidine(32) in tRNA + L-cysteinyl-[cysteine desulfurase] + A + AMP + diphosphate + H(+). The protein operates within tRNA modification. Functionally, catalyzes the ATP-dependent 2-thiolation of cytidine in position 32 of tRNA, to form 2-thiocytidine (s(2)C32). The sulfur atoms are provided by the cysteine/cysteine desulfurase (IscS) system. This Deinococcus geothermalis (strain DSM 11300 / CIP 105573 / AG-3a) protein is tRNA-cytidine(32) 2-sulfurtransferase.